Reading from the N-terminus, the 467-residue chain is Protein CitXG (467 aa).

An apo-citrate lyase phosphoribosyl-dephospho-CoA transferase region spans residues methionine 1–serine 178. Residues lysine 179 to leucine 467 are 2-(5''-triphosphoribosyl)-3'-dephosphocoenzyme-A synthase.

The protein in the N-terminal section; belongs to the CitX family. This sequence in the C-terminal section; belongs to the CitG/MdcB family.

It carries out the reaction apo-[citrate lyase ACP] + 2'-(5''-triphospho-alpha-D-ribosyl)-3'-dephospho-CoA = holo-[citrate lyase ACP] + diphosphate. It catalyses the reaction 3'-dephospho-CoA + ATP = 2'-(5''-triphospho-alpha-D-ribosyl)-3'-dephospho-CoA + adenine. Its function is as follows. Bifunctional enzyme that catalyzes formation of 2-(5''-triphosphoribosyl)-3'-dephosphocoenzyme-A, and then the transfer of this prosthetic group precursor to the apo-acyl carrier protein (gamma chain) of the citrate lyase to yield the holo-acyl carrier protein. The sequence is that of Protein CitXG (citXG) from Leuconostoc mesenteroides subsp. cremoris.